The chain runs to 683 residues: Methionine--tRNA ligase (683 aa).

Positions 15-25 (PYANGPIHLGH) match the 'HIGH' region motif. Residues Cys146, Cys149, Cys159, and Cys162 each contribute to the Zn(2+) site. The 'KMSKS' region signature appears at 332–336 (KMSKS). Lys335 is an ATP binding site. Positions 581–683 (DFFKVDLRVA…AGAKAGQRVK (103 aa)) constitute a tRNA-binding domain.

Belongs to the class-I aminoacyl-tRNA synthetase family. MetG type 1 subfamily. In terms of assembly, homodimer. Zn(2+) serves as cofactor.

It localises to the cytoplasm. It carries out the reaction tRNA(Met) + L-methionine + ATP = L-methionyl-tRNA(Met) + AMP + diphosphate. Its function is as follows. Is required not only for elongation of protein synthesis but also for the initiation of all mRNA translation through initiator tRNA(fMet) aminoacylation. The chain is Methionine--tRNA ligase from Histophilus somni (strain 129Pt) (Haemophilus somnus).